A 509-amino-acid polypeptide reads, in one-letter code: Cytochrome P450 monooxygenase alt3 (509 aa).

A helical transmembrane segment spans residues 25 to 45 (IITGIIVLPVLYVLLKVIYNL). Cys-450 lines the heme pocket.

The protein belongs to the cytochrome P450 family. Requires heme as cofactor.

Its subcellular location is the membrane. The protein operates within secondary metabolite biosynthesis. Functionally, cytochrome P450 monooxygenase; part of the gene cluster that mediates the biosynthesis of alternapyrone derivatives. Alternapyrone is a decaketide with octa-methylation from methionine on every C2 unit except the third unit. All the domains in the polyketide synthase alt5 are apparently involved in alternapyrone synthesis, that is, the 8 CMeT, 7 KR, 7 DH, and 4 ER reactions in the 9 KS-mediated condensation steps required for alternapyrone synthesis. the alternapyrone produced by alt5 might be intensively modified by cytochrome P450 monooxygenases alt1, alt2 and alt3 and FAD-dependent oxidoreductase alt4 present in the alt gene cluster. The protein is Cytochrome P450 monooxygenase alt3 of Alternaria solani.